A 60-amino-acid chain; its full sequence is Toxin C10S2C2 (60 aa).

Cystine bridges form between C3–C22, C17–C39, C41–C52, and C53–C58. Residues 41–48 (CPTAMWPY) are important for binding to L-type calcium channels.

The protein belongs to the three-finger toxin family. Short-chain subfamily. L-type calcium blocker sub-subfamily. As to expression, expressed by the venom gland.

The protein resides in the secreted. Its function is as follows. This specific blocker of the L-type calcium channel (Cav1/CACNA1) is a smooth muscle relaxant and an inhibitor of cardiac contractions. In Dendroaspis angusticeps (Eastern green mamba), this protein is Toxin C10S2C2.